The sequence spans 145 residues: MLSVQPDTKPKGCAGCNRKIKDRYLLKALDKYWHEDCLKCACCDCRLGEVGSTLYTKANLILCRRDYLRLFGVTGNCAACSKLIPAFEMVMRAKENVYHLDCFACQLCNQRFCVGDKFFLKNNMILCQTDYEEGLMKEGYAPQVR.

LIM zinc-binding domains follow at residues 11–73 (KGCA…LFGV) and 75–137 (GNCA…GLMK).

This is LIM domain only protein 3 from Danio rerio (Zebrafish).